The chain runs to 423 residues: Gamma-glutamyl phosphate reductase (423 aa).

Belongs to the gamma-glutamyl phosphate reductase family.

It localises to the cytoplasm. The enzyme catalyses L-glutamate 5-semialdehyde + phosphate + NADP(+) = L-glutamyl 5-phosphate + NADPH + H(+). It functions in the pathway amino-acid biosynthesis; L-proline biosynthesis; L-glutamate 5-semialdehyde from L-glutamate: step 2/2. In terms of biological role, catalyzes the NADPH-dependent reduction of L-glutamate 5-phosphate into L-glutamate 5-semialdehyde and phosphate. The product spontaneously undergoes cyclization to form 1-pyrroline-5-carboxylate. The chain is Gamma-glutamyl phosphate reductase from Paramagnetospirillum magneticum (strain ATCC 700264 / AMB-1) (Magnetospirillum magneticum).